Here is a 315-residue protein sequence, read N- to C-terminus: Methionyl-tRNA formyltransferase (315 aa).

113–116 serves as a coordination point for (6S)-5,6,7,8-tetrahydrofolate; that stretch reads SLLP.

The protein belongs to the Fmt family.

It catalyses the reaction L-methionyl-tRNA(fMet) + (6R)-10-formyltetrahydrofolate = N-formyl-L-methionyl-tRNA(fMet) + (6S)-5,6,7,8-tetrahydrofolate + H(+). Its function is as follows. Attaches a formyl group to the free amino group of methionyl-tRNA(fMet). The formyl group appears to play a dual role in the initiator identity of N-formylmethionyl-tRNA by promoting its recognition by IF2 and preventing the misappropriation of this tRNA by the elongation apparatus. This is Methionyl-tRNA formyltransferase from Edwardsiella ictaluri (strain 93-146).